The following is a 111-amino-acid chain: MQLMLFNLFSPALKLNTGLAILSPGAFEVHSDGIDVDNELFHYPIKKAYTPYNIHTYKTEEVVNQMNIKVKNMTLDEINNTYCNNDYYNQAIREEPIDLLDRSFSSSSWPF.

The polypeptide is Putative protein YddJ (yddJ) (Escherichia coli (strain K12)).